Consider the following 391-residue polypeptide: Imidazolonepropionase (391 aa).

2 residues coordinate Fe(3+): histidine 72 and histidine 74. Zn(2+) is bound by residues histidine 72 and histidine 74. Residues arginine 81, tyrosine 139, and histidine 166 each coordinate 4-imidazolone-5-propanoate. Residue tyrosine 139 participates in N-formimidoyl-L-glutamate binding. Fe(3+) is bound at residue histidine 229. Histidine 229 contributes to the Zn(2+) binding site. Residue glutamine 232 participates in 4-imidazolone-5-propanoate binding. A Fe(3+)-binding site is contributed by aspartate 303. Zn(2+) is bound at residue aspartate 303. 2 residues coordinate N-formimidoyl-L-glutamate: asparagine 305 and glycine 307. Serine 308 serves as a coordination point for 4-imidazolone-5-propanoate.

The protein belongs to the metallo-dependent hydrolases superfamily. HutI family. It depends on Zn(2+) as a cofactor. Fe(3+) serves as cofactor.

It is found in the cytoplasm. It catalyses the reaction 4-imidazolone-5-propanoate + H2O = N-formimidoyl-L-glutamate. It functions in the pathway amino-acid degradation; L-histidine degradation into L-glutamate; N-formimidoyl-L-glutamate from L-histidine: step 3/3. In terms of biological role, catalyzes the hydrolytic cleavage of the carbon-nitrogen bond in imidazolone-5-propanoate to yield N-formimidoyl-L-glutamate. It is the third step in the universal histidine degradation pathway. The polypeptide is Imidazolonepropionase (Streptomyces coelicolor (strain ATCC BAA-471 / A3(2) / M145)).